Reading from the N-terminus, the 673-residue chain is F420-dependent formate dehydrogenase subunit alpha (673 aa).

Residues 3–59 (FKIVNTICPYCGVGCGLGLVVKDGRVIGIHPNKRHPINEGKLCAKGNYCYQFIHSKD) enclose the 4Fe-4S Mo/W bis-MGD-type domain. Cys10, Cys13, Cys17, and Cys45 together coordinate [4Fe-4S] cluster. A non-standard amino acid (selenocysteine) is located at residue Sec131.

This sequence belongs to the prokaryotic molybdopterin-containing oxidoreductase family. As to quaternary structure, dimer of an alpha (FdhA) and a beta (FdhB) subunit. [4Fe-4S] cluster serves as cofactor. The cofactor is Mo-bis(molybdopterin guanine dinucleotide). It depends on Zn(2+) as a cofactor.

It catalyses the reaction oxidized coenzyme F420-(gamma-L-Glu)(n) + formate + 2 H(+) = reduced coenzyme F420-(gamma-L-Glu)(n) + CO2. Its function is as follows. Catalyzes the oxidation of formate to carbon dioxide, with coenzyme F420 as the electron acceptor. In Methanocaldococcus jannaschii (strain ATCC 43067 / DSM 2661 / JAL-1 / JCM 10045 / NBRC 100440) (Methanococcus jannaschii), this protein is F420-dependent formate dehydrogenase subunit alpha (fdhA).